Here is a 546-residue protein sequence, read N- to C-terminus: Cytochrome P450 monooxygenase fumoB (546 aa).

A helical membrane pass occupies residues 13 to 33 (LGYYEKLAGILGIIGLVLLFW). An N-linked (GlcNAc...) asparagine glycan is attached at asparagine 147. Cysteine 488 contacts heme.

The protein belongs to the cytochrome P450 family. Heme is required as a cofactor.

It is found in the membrane. The protein operates within secondary metabolite biosynthesis. Cytochrome P450 monooxygenase; part of the gene cluster that mediates the biosynthesis of fumosorinone, a 2-pyridone alkaloid that acts as an inhibitor of protein tyrosine phosphatase 1B which is implicated asa negative regulator of insulin receptor signaling and a potential drug target for the treatment of type II diabetes and other associated metabolic syndromes. The polyketide-amino acid backbone of fumosorinone is first assembled by the PKS-NRPS hybrid fumoS. The PKS modules condense one acetyl-CoA starter unit with 7 malonyl-CoA units, programmed C-methylations occurring after the first 3 and the sixth extensions, and cycles of full reduction occurring after the first 2 extensions. Because fumoS lacks a designated enoyl reductase (ER) domain, the required activity is provided the enoyl reductase fumoC. Upon formation of the polyketide backbone on the thiotemplate, the polyketide is transferred to the NRPS module and linked to tyrosine to produce the acyltetramic acid intermediate called prefumosorinone A. The cytochrome P450 monooxygenase fumoA then probably catalyzes an unprecedented oxidative ring expansion of prefumosorinone A to form prefumosorinone B which contains the 2-pyridone core of fumosorinone. The cytochrome P450 monooxygenase fumoB might hydroxylate the nitrogen of prefumosorinone B, but not the acyltetramic acid prefumosorinone A, to form fumosorinone. In Cordyceps fumosorosea (strain ARSEF 2679) (Isaria fumosorosea), this protein is Cytochrome P450 monooxygenase fumoB.